The sequence spans 507 residues: Phospho-2-dehydro-3-deoxyheptonate aldolase 2, chloroplastic (507 aa).

The protein belongs to the class-II DAHP synthase family.

It localises to the plastid. The protein resides in the chloroplast. The catalysed reaction is D-erythrose 4-phosphate + phosphoenolpyruvate + H2O = 7-phospho-2-dehydro-3-deoxy-D-arabino-heptonate + phosphate. It participates in metabolic intermediate biosynthesis; chorismate biosynthesis; chorismate from D-erythrose 4-phosphate and phosphoenolpyruvate: step 1/7. The chain is Phospho-2-dehydro-3-deoxyheptonate aldolase 2, chloroplastic (DHS2) from Arabidopsis thaliana (Mouse-ear cress).